We begin with the raw amino-acid sequence, 1049 residues long: Cilia- and flagella-associated protein 337 (1049 aa).

The EF-hand domain maps to 81-116 (GTKEEYGELFDKVDVAQDGFINWDKLTSFILLELYE). WD repeat units lie at residues 138-177 (KHKD…QETF), 358-397 (NIAQ…KPVG), 401-440 (GHSA…SIQR), 487-528 (SHEK…KQFT), 531-570 (HGNA…HHTL), and 633-671 (QHHD…AHHV). A disordered region spans residues 691–712 (LLSAGRSQPSHPMADHSTTGVR). Over residues 695–711 (GRSQPSHPMADHSTTGV) the composition is skewed to polar residues. WD repeat units follow at residues 719–766 (EGKN…LLAE), 769–809 (AHSG…LNSS), and 825–866 (PHED…VWIF).

The protein belongs to the CFAP337 family. As to quaternary structure, associates with components of the nexin-dynein regulatory complex (N-DRC) and the CFAP184:CFAP263 complex.

Its subcellular location is the cell projection. The protein resides in the cilium. Its function is as follows. Associates with components of the nexin-dynein regulatory complex (N-DRC), a key regulator of ciliary/flagellar motility, and might act as an inner dynein arm (IDA) hub or linkage. The protein is Cilia- and flagella-associated protein 337 of Homo sapiens (Human).